Here is a 204-residue protein sequence, read N- to C-terminus: Methylthioribulose-1-phosphate dehydratase (204 aa).

Residues H94 and H96 each coordinate Zn(2+).

The protein belongs to the aldolase class II family. MtnB subfamily. Zn(2+) is required as a cofactor.

It catalyses the reaction 5-(methylsulfanyl)-D-ribulose 1-phosphate = 5-methylsulfanyl-2,3-dioxopentyl phosphate + H2O. Its pathway is amino-acid biosynthesis; L-methionine biosynthesis via salvage pathway; L-methionine from S-methyl-5-thio-alpha-D-ribose 1-phosphate: step 2/6. Its function is as follows. Catalyzes the dehydration of methylthioribulose-1-phosphate (MTRu-1-P) into 2,3-diketo-5-methylthiopentyl-1-phosphate (DK-MTP-1-P). The polypeptide is Methylthioribulose-1-phosphate dehydratase (Cronobacter sakazakii (strain ATCC BAA-894) (Enterobacter sakazakii)).